Reading from the N-terminus, the 139-residue chain is Peptide methionine sulfoxide reductase MsrB (139 aa).

The region spanning 8 to 130 (DREWQRELSP…NSASLQLKTQ (123 aa)) is the MsrB domain. Zn(2+) contacts are provided by C47, C50, C96, and C99. The active-site Nucleophile is the C119.

It belongs to the MsrB Met sulfoxide reductase family. The cofactor is Zn(2+).

The enzyme catalyses L-methionyl-[protein] + [thioredoxin]-disulfide + H2O = L-methionyl-(R)-S-oxide-[protein] + [thioredoxin]-dithiol. In Acinetobacter baumannii (strain SDF), this protein is Peptide methionine sulfoxide reductase MsrB.